The primary structure comprises 249 residues: Diaminopimelate epimerase (249 aa).

Residues asparagine 11 and asparagine 60 each contribute to the substrate site. Cysteine 69 (proton donor) is an active-site residue. Substrate is bound by residues 70-71 (GN), asparagine 164, and 182-183 (ER). Cysteine 192 acts as the Proton acceptor in catalysis. 193-194 (GT) provides a ligand contact to substrate.

This sequence belongs to the diaminopimelate epimerase family. In terms of assembly, homodimer.

Its subcellular location is the cytoplasm. The catalysed reaction is (2S,6S)-2,6-diaminopimelate = meso-2,6-diaminopimelate. The protein operates within amino-acid biosynthesis; L-lysine biosynthesis via DAP pathway; DL-2,6-diaminopimelate from LL-2,6-diaminopimelate: step 1/1. In terms of biological role, catalyzes the stereoinversion of LL-2,6-diaminopimelate (L,L-DAP) to meso-diaminopimelate (meso-DAP), a precursor of L-lysine and an essential component of the bacterial peptidoglycan. The chain is Diaminopimelate epimerase from Campylobacter jejuni subsp. jejuni serotype O:23/36 (strain 81-176).